The chain runs to 283 residues: Diaminopimelate epimerase (283 aa).

2 residues coordinate substrate: Asn13 and Asn65. The Proton donor role is filled by Cys74. Substrate contacts are provided by residues 75–76, Asn196, and 214–215; these read GN and ER. Catalysis depends on Cys223, which acts as the Proton acceptor. Substrate is bound at residue 224–225; the sequence is GT.

Belongs to the diaminopimelate epimerase family. Homodimer.

The protein localises to the cytoplasm. It catalyses the reaction (2S,6S)-2,6-diaminopimelate = meso-2,6-diaminopimelate. It participates in amino-acid biosynthesis; L-lysine biosynthesis via DAP pathway; DL-2,6-diaminopimelate from LL-2,6-diaminopimelate: step 1/1. Catalyzes the stereoinversion of LL-2,6-diaminopimelate (L,L-DAP) to meso-diaminopimelate (meso-DAP), a precursor of L-lysine and an essential component of the bacterial peptidoglycan. This is Diaminopimelate epimerase from Alkaliphilus metalliredigens (strain QYMF).